A 240-amino-acid chain; its full sequence is Bidirectional sugar transporter SWEET7c (240 aa).

Over Met-1–Gly-12 the chain is Extracellular. A MtN3/slv 1 domain is found at Val-10–Leu-48. A helical membrane pass occupies residues Ile-13–Ile-33. Residues Ile-34–Pro-46 lie on the Cytoplasmic side of the membrane. Residues Ile-47 to Phe-67 traverse the membrane as a helical segment. At Phe-68–Lys-78 the chain is on the extracellular side. Residues Met-79–Leu-99 form a helical membrane-spanning segment. At Gly-100–Ser-108 the chain is on the cytoplasmic side. A helical membrane pass occupies residues Leu-109–Ile-129. The region spanning Ile-110–Thr-191 is the MtN3/slv 2 domain. The Extracellular portion of the chain corresponds to Met-130–Met-140. The chain crosses the membrane as a helical span at residues Pro-141–Ile-161. The Cytoplasmic portion of the chain corresponds to Arg-162–Asp-164. Residues Ile-165–Tyr-185 form a helical membrane-spanning segment. Topologically, residues Ala-186–Pro-240 are extracellular. N-linked (GlcNAc...) asparagine glycosylation is found at Asn-225 and Asn-235.

Belongs to the SWEET sugar transporter family. Forms homooligomers and/or heterooligomers.

The protein resides in the cell membrane. In terms of biological role, mediates both low-affinity uptake and efflux of sugar across the plasma membrane. This Oryza sativa subsp. indica (Rice) protein is Bidirectional sugar transporter SWEET7c (SWEET7C).